A 1034-amino-acid chain; its full sequence is Potassium-transporting ATPase alpha chain 1 (1034 aa).

The Cytoplasmic segment spans residues Gly-2 to Pro-97. Residues Tyr-7 and Tyr-10 each carry the phosphotyrosine modification. The segment at Glu-13–Glu-40 is disordered. Residues Met-26 to Lys-39 are compositionally biased toward basic residues. Position 27 is a phosphoserine; by PKA and PKC (Ser-27). A helical membrane pass occupies residues Glu-98–Ala-118. The Lumenal segment spans residues Ala-119–Tyr-141. The chain crosses the membrane as a helical span at residues Leu-142–Phe-162. Topologically, residues Lys-163–Ile-298 are cytoplasmic. The segment at Lys-222–Glu-244 is disordered. Residues Asn-225–Pro-239 show a composition bias toward polar residues. Residues Glu-299–Ile-318 traverse the membrane as a helical segment. Topologically, residues Val-319–Ala-330 are lumenal. The chain crosses the membrane as a helical span at residues Met-331–Ala-348. Residues Val-339, Ala-340, Val-342, and Glu-344 each contribute to the K(+) site. Residues Thr-349–Leu-782 lie on the Cytoplasmic side of the membrane. Asp-386 acts as the 4-aspartylphosphate intermediate in catalysis. Mg(2+)-binding residues include Asp-386 and Thr-388. 2 positions are modified to phosphoserine: Ser-462 and Ser-600. 2 residues coordinate Mg(2+): Asp-727 and Asp-731. A helical transmembrane segment spans residues Lys-783–Ile-802. Residue Glu-796 coordinates K(+). At Tyr-803 to Leu-812 the chain is on the lumenal side. Residues Gly-813–Ala-833 traverse the membrane as a helical segment. Glu-821 serves as a coordination point for K(+). The Cytoplasmic portion of the chain corresponds to Tyr-834–Arg-853. Position 839 is a phosphoserine (Ser-839). Residues Leu-854 to Phe-876 traverse the membrane as a helical segment. Residues Thr-877–Cys-928 are Lumenal-facing. The chain crosses the membrane as a helical span at residues Tyr-929–Lys-948. The Cytoplasmic segment spans residues Thr-949–Asn-962. Ser-953 bears the Phosphoserine; by PKA mark. Residues Arg-963 to Tyr-981 form a helical membrane-spanning segment. Topologically, residues Cys-982–Phe-996 are lumenal. Residues Gln-997–Lys-1017 form a helical membrane-spanning segment. At Leu-1018–Tyr-1034 the chain is on the cytoplasmic side.

The protein belongs to the cation transport ATPase (P-type) (TC 3.A.3) family. Type IIC subfamily. In terms of assembly, the gastric H(+)/K(+) ATPase pump is composed of the catalytic alpha subunit ATP4A and the regulatory beta subunit ATP4B. Interacts (via the P-domain) with ATP4B (via N-terminus); this interaction stabilizes the lumenal-open E2 conformation state and prevents the reverse reaction of the transport cycle.

It localises to the apical cell membrane. The protein resides in the cell membrane. It carries out the reaction K(+)(out) + ATP + H2O + H(+)(in) = K(+)(in) + ADP + phosphate + 2 H(+)(out). Down-regulated by K(+)-competitive acid blockers (P-CABs) such as vonoprazan. The catalytic subunit of the gastric H(+)/K(+) ATPase pump which transports H(+) ions in exchange for K(+) ions across the apical membrane of parietal cells. Uses ATP as an energy source to pump H(+) ions to the gastric lumen while transporting K(+) ion from the lumen into the cell. Remarkably generates a million-fold proton gradient across the gastric parietal cell membrane, acidifying the gastric juice down to pH 1. Within a transport cycle, the transfer of a H(+) ion across the membrane is coupled to ATP hydrolysis and is associated with a transient phosphorylation that shifts the pump conformation from inward-facing (E1) to outward-facing state (E2). The release of the H(+) ion in the stomach lumen is followed by binding of K(+) ion converting the pump conformation back to the E1 state. The chain is Potassium-transporting ATPase alpha chain 1 (ATP4A) from Sus scrofa (Pig).